We begin with the raw amino-acid sequence, 674 residues long: DNA ligase (674 aa).

NAD(+) contacts are provided by residues 31–35 (DYEYD), 80–81 (SL), and Glu-110. Lys-112 functions as the N6-AMP-lysine intermediate in the catalytic mechanism. NAD(+) is bound by residues Arg-133, Glu-167, Lys-283, and Lys-307. 4 residues coordinate Zn(2+): Cys-401, Cys-404, Cys-419, and Cys-424. The BRCT domain occupies 584-673 (KVEKIFEGMK…SKDEVKAVLE (90 aa)).

The protein belongs to the NAD-dependent DNA ligase family. LigA subfamily. Mg(2+) is required as a cofactor. Mn(2+) serves as cofactor.

The enzyme catalyses NAD(+) + (deoxyribonucleotide)n-3'-hydroxyl + 5'-phospho-(deoxyribonucleotide)m = (deoxyribonucleotide)n+m + AMP + beta-nicotinamide D-nucleotide.. Functionally, DNA ligase that catalyzes the formation of phosphodiester linkages between 5'-phosphoryl and 3'-hydroxyl groups in double-stranded DNA using NAD as a coenzyme and as the energy source for the reaction. It is essential for DNA replication and repair of damaged DNA. The protein is DNA ligase of Clostridioides difficile (strain 630) (Peptoclostridium difficile).